A 1521-amino-acid chain; its full sequence is Probable DNA topoisomerase 2 (1521 aa).

Residues 1–10 are compositionally biased toward acidic residues; that stretch reads MSDSENDYSD. Positions 1–87 are disordered; the sequence is MSDSENDYSD…DDKSSSSDNE (87 aa). The segment covering 36–48 has biased composition (basic residues); it reads SKKKASATRKPAA. Residues 49–62 are compositionally biased toward low complexity; it reads KKATTTTTSTTKKS. ATP contacts are provided by residues Asn-163, Asn-192, 220-222, and 233-240; these read SSH and GRNGFGAK. The interval 412-414 is interaction with DNA; that stretch reads NKK. 446-448 contributes to the ATP binding site; that stretch reads QTK. The Toprim domain occupies 527-640; it reads CTLILTEGDS…TLLRMPGFLV (114 aa). Mg(2+)-binding residues include Glu-533, Asp-609, and Asp-611. The Topo IIA-type catalytic domain maps to 771-1273; that stretch reads IPNIVDGLKT…PIQEIYKRDL (503 aa). The active-site O-(5'-phospho-DNA)-tyrosine intermediate is the Tyr-861. The segment at 1007–1047 is disordered; that stretch reads GTRKKKKEEKEKKAASRKGTKAKPTTTKRSKRVDDDDDNEK. The segment covering 1021-1037 has biased composition (basic residues); sequence ASRKGTKAKPTTTKRSK. Residues 1085 to 1094 form an interaction with DNA region; that stretch reads KLVSTINETN. 2 disordered regions span residues 1192–1222 and 1335–1521; these read KIKK…EQDD and IPTT…SDSD. Over residues 1201–1222 the composition is skewed to acidic residues; it reads DEEDAAISSDEEKDGAQEEQDD. Residues 1354–1368 show a composition bias toward low complexity; the sequence is TTSTSTSTTTSSNTK. Residues 1422–1438 show a composition bias toward acidic residues; that stretch reads LSDESDQESDQESDQGS. The segment covering 1454–1467 has biased composition (low complexity); the sequence is PTTIATKKATTSKS. The segment covering 1468 to 1480 has biased composition (basic and acidic residues); that stretch reads KVIDDKSSDDEVI. The segment covering 1503-1521 has biased composition (acidic residues); sequence SDSDDDDLYDNEESSSDSD.

The protein belongs to the type II topoisomerase family. As to quaternary structure, homodimer. The cofactor is Mg(2+). Mn(2+) is required as a cofactor. Ca(2+) serves as cofactor.

The protein localises to the nucleus. It catalyses the reaction ATP-dependent breakage, passage and rejoining of double-stranded DNA.. Its function is as follows. Control of topological states of DNA by transient breakage and subsequent rejoining of DNA strands. Topoisomerase II makes double-strand breaks. This is Probable DNA topoisomerase 2 (top2) from Dictyostelium discoideum (Social amoeba).